The following is a 328-amino-acid chain: Fructosamine deglycase FrlB (328 aa).

2 consecutive SIS domains span residues 15 to 153 (FLQD…VLEN) and 181 to 311 (NAKQ…ELAE).

Homooctamer.

In terms of biological role, catalyzes the conversion of a range of fructosamine 6-phosphates to glucose 6-phosphate and a free amino acid. This Bacillus subtilis (strain 168) protein is Fructosamine deglycase FrlB (frlB).